Here is a 423-residue protein sequence, read N- to C-terminus: Flotillin-1 (423 aa).

It belongs to the band 7/mec-2 family. Flotillin subfamily. Heterooligomeric complex of flotillin-1 and flotillin-2 and caveolin-1 and caveolin-2. As to expression, normally expressed in growing retinal exons of newly differentiated ganglion cells at the retinal margin. After optic nerve injury, expressed in all retinal ganglion cells and retinal axons. Also expressed in endothelial cells, spinal cord, larval and adult skin, muscle processes, thymus and gill macrophages.

It is found in the cell membrane. The protein localises to the endosome. Its subcellular location is the membrane. The protein resides in the caveola. It localises to the melanosome. It is found in the membrane raft. Its function is as follows. May act as a scaffolding protein within caveolar membranes, functionally participating in formation of caveolae or caveolae-like vesicles. This is Flotillin-1 (flot1) from Carassius auratus (Goldfish).